Here is a 334-residue protein sequence, read N- to C-terminus: Adenosine deaminase (334 aa).

Zn(2+)-binding residues include His-12 and His-14. The substrate site is built by His-14, Asp-16, and Gly-170. His-197 contributes to the Zn(2+) binding site. The active-site Proton donor is Glu-200. Asp-278 provides a ligand contact to Zn(2+). Residue Asp-279 coordinates substrate.

It belongs to the metallo-dependent hydrolases superfamily. Adenosine and AMP deaminases family. Adenosine deaminase subfamily. It depends on Zn(2+) as a cofactor.

It carries out the reaction adenosine + H2O + H(+) = inosine + NH4(+). The enzyme catalyses 2'-deoxyadenosine + H2O + H(+) = 2'-deoxyinosine + NH4(+). Functionally, catalyzes the hydrolytic deamination of adenosine and 2-deoxyadenosine. In Vibrio parahaemolyticus serotype O3:K6 (strain RIMD 2210633), this protein is Adenosine deaminase.